Here is a 473-residue protein sequence, read N- to C-terminus: Catalase easC (473 aa).

Positions 1 to 15 are enriched in low complexity; that stretch reads MASEVSVASSGSEHS. Residues 1-31 are disordered; sequence MASEVSVASSGSEHSGAQKCPFQDPGLSSMD. His54 is an active-site residue. Tyr344 contacts heme. A disordered region spans residues 352–389; it reads LGPNNLDLPANRTKKLADGSRPEKAEMAPQKVPSQEHA. Residues 366–377 are compositionally biased toward basic and acidic residues; that stretch reads KLADGSRPEKAE.

It belongs to the catalase family. Heme serves as cofactor.

It participates in alkaloid biosynthesis; ergot alkaloid biosynthesis. Functionally, catalase; part of the gene cluster that mediates the biosynthesis of fungal ergot alkaloid. DmaW catalyzes the first step of ergot alkaloid biosynthesis by condensing dimethylallyl diphosphate (DMAP) and tryptophan to form 4-dimethylallyl-L-tryptophan. The second step is catalyzed by the methyltransferase easF that methylates 4-dimethylallyl-L-tryptophan in the presence of S-adenosyl-L-methionine, resulting in the formation of 4-dimethylallyl-L-abrine. The catalase easC and the FAD-dependent oxidoreductase easE then transform 4-dimethylallyl-L-abrine to chanoclavine-I which is further oxidized by easD in the presence of NAD(+), resulting in the formation of chanoclavine-I aldehyde. Agroclavine dehydrogenase easG then mediates the conversion of chanoclavine-I aldehyde to agroclavine via a non-enzymatic adduct reaction: the substrate is an iminium intermediate that is formed spontaneously from chanoclavine-I aldehyde in the presence of glutathione. The presence of easA is not required to complete this reaction. Further conversion of agroclavine to paspalic acid is a two-step process involving oxidation of agroclavine to elymoclavine and of elymoclavine to paspalic acid, the second step being performed by the elymoclavine oxidase cloA. Paspalic acid is then further converted to D-lysergic acid. Ergopeptines are assembled from D-lysergic acid and three different amino acids by the D-lysergyl-peptide-synthetases composed each of a monomudular and a trimodular nonribosomal peptide synthetase subunit. LpsB and lpsC encode the monomodular subunits responsible for D-lysergic acid activation and incorporation into the ergopeptine backbone. LpsA1 and A2 subunits encode the trimodular nonribosomal peptide synthetase assembling the tripeptide portion of ergopeptines. LpsA1 is responsible for formation of the major ergopeptine, ergotamine, and lpsA2 for alpha-ergocryptine, the minor ergopeptine of the total alkaloid mixture elaborated by C.purpurea. D-lysergyl-tripeptides are assembled by the nonribosomal peptide synthetases and released as N-(D-lysergyl-aminoacyl)-lactams. Cyclolization of the D-lysergyl-tripeptides is performed by the Fe(2+)/2-ketoglutarate-dependent dioxygenase easH which introduces a hydroxyl group into N-(D-lysergyl-aminoacyl)-lactam at alpha-C of the aminoacyl residue followed by spontaneous condensation with the terminal lactam carbonyl group. This chain is Catalase easC, found in Claviceps purpurea (strain 20.1) (Ergot fungus).